Reading from the N-terminus, the 252-residue chain is Imidazole glycerol phosphate synthase subunit HisF (252 aa).

Catalysis depends on residues aspartate 11 and aspartate 130.

This sequence belongs to the HisA/HisF family. In terms of assembly, heterodimer of HisH and HisF.

It localises to the cytoplasm. The enzyme catalyses 5-[(5-phospho-1-deoxy-D-ribulos-1-ylimino)methylamino]-1-(5-phospho-beta-D-ribosyl)imidazole-4-carboxamide + L-glutamine = D-erythro-1-(imidazol-4-yl)glycerol 3-phosphate + 5-amino-1-(5-phospho-beta-D-ribosyl)imidazole-4-carboxamide + L-glutamate + H(+). The protein operates within amino-acid biosynthesis; L-histidine biosynthesis; L-histidine from 5-phospho-alpha-D-ribose 1-diphosphate: step 5/9. In terms of biological role, IGPS catalyzes the conversion of PRFAR and glutamine to IGP, AICAR and glutamate. The HisF subunit catalyzes the cyclization activity that produces IGP and AICAR from PRFAR using the ammonia provided by the HisH subunit. In Bacillus cereus (strain AH187), this protein is Imidazole glycerol phosphate synthase subunit HisF.